The sequence spans 389 residues: MSEYLFTSESVSEGHPDKVADQISDAILDAILREDKHARVAAETLVNTGLVVLAGEITTTANVDYIKIARETIKRIGYDDSELGFDFRGCAVMACYDKQSPDIAQGVNEGEGLDLNQGAGDQGLMFGYACDETPTLMPFPIYYAHRLVQRQAELRKDGRLPWLRPDAKSQITCVYDAATGLPKRIDTVVLSTQHSPDIDHKTLSEAVIEDIVKPVLPPEMITPETKFLINPTGRFVIGGPMGDCGLTGRKIIVDTYGGAAPHGGGAFSGKDPSKVDRSAAYAGRYVAKNIVAAGLARQCQIQVSYAIGVAEPTSIAVDTFGTNKIPNEKIVELVKKHFDLRPKGIIQMLDLLRPIYGKTAAYGHFGREEPEFSWERTDKVEALRADAGL.

Histidine 15 lines the ATP pocket. Aspartate 17 contacts Mg(2+). Residue glutamate 43 coordinates K(+). 2 residues coordinate L-methionine: glutamate 56 and glutamine 99. The tract at residues 99-109 (QSPDIAQGVNE) is flexible loop. Residues 166 to 168 (DAK), 234 to 235 (RF), aspartate 243, 249 to 250 (RK), alanine 266, and lysine 270 each bind ATP. Aspartate 243 serves as a coordination point for L-methionine. Lysine 274 serves as a coordination point for L-methionine.

It belongs to the AdoMet synthase family. In terms of assembly, homotetramer; dimer of dimers. Mg(2+) is required as a cofactor. K(+) serves as cofactor.

It localises to the cytoplasm. It catalyses the reaction L-methionine + ATP + H2O = S-adenosyl-L-methionine + phosphate + diphosphate. Its pathway is amino-acid biosynthesis; S-adenosyl-L-methionine biosynthesis; S-adenosyl-L-methionine from L-methionine: step 1/1. Its function is as follows. Catalyzes the formation of S-adenosylmethionine (AdoMet) from methionine and ATP. The overall synthetic reaction is composed of two sequential steps, AdoMet formation and the subsequent tripolyphosphate hydrolysis which occurs prior to release of AdoMet from the enzyme. In Chromobacterium violaceum (strain ATCC 12472 / DSM 30191 / JCM 1249 / CCUG 213 / NBRC 12614 / NCIMB 9131 / NCTC 9757 / MK), this protein is S-adenosylmethionine synthase.